We begin with the raw amino-acid sequence, 294 residues long: Pantothenate synthetase 3 (294 aa).

31–38 (MGALHEGH) is a binding site for ATP. The active-site Proton donor is the His38. Gln62 is a binding site for (R)-pantoate. Beta-alanine is bound at residue Gln62. 154–157 (GEKD) is an ATP binding site. (R)-pantoate is bound at residue Gln160. 191 to 194 (LSSR) contacts ATP.

The protein belongs to the pantothenate synthetase family. As to quaternary structure, homodimer.

The protein resides in the cytoplasm. It carries out the reaction (R)-pantoate + beta-alanine + ATP = (R)-pantothenate + AMP + diphosphate + H(+). It participates in cofactor biosynthesis; (R)-pantothenate biosynthesis; (R)-pantothenate from (R)-pantoate and beta-alanine: step 1/1. In terms of biological role, catalyzes the condensation of pantoate with beta-alanine in an ATP-dependent reaction via a pantoyl-adenylate intermediate. This is Pantothenate synthetase 3 from Frankia alni (strain DSM 45986 / CECT 9034 / ACN14a).